The following is a 148-amino-acid chain: Ubiquitin-conjugating enzyme E2 29 (148 aa).

The 147-residue stretch at 1 to 147 folds into the UBC core domain; the sequence is MATRRILKEL…ARSWTQKYAL (147 aa). The Glycyl thioester intermediate role is filled by cysteine 85.

Belongs to the ubiquitin-conjugating enzyme family.

It catalyses the reaction S-ubiquitinyl-[E1 ubiquitin-activating enzyme]-L-cysteine + [E2 ubiquitin-conjugating enzyme]-L-cysteine = [E1 ubiquitin-activating enzyme]-L-cysteine + S-ubiquitinyl-[E2 ubiquitin-conjugating enzyme]-L-cysteine.. It functions in the pathway protein modification; protein ubiquitination. Functionally, accepts the ubiquitin from the E1 complex and catalyzes its covalent attachment to other proteins. The sequence is that of Ubiquitin-conjugating enzyme E2 29 (UBC29) from Arabidopsis thaliana (Mouse-ear cress).